Here is a 325-residue protein sequence, read N- to C-terminus: L-lactate dehydrogenase (325 aa).

NAD(+) is bound by residues Val21, Asp42, Lys47, Tyr73, and Gly87–Ala88. Residues Gln90, Arg96, and Asn128–Asp131 contribute to the substrate site. Residues Ala126 to Asn128 and Ser151 each bind NAD(+). Residue Asp156 to Arg159 participates in substrate binding. Arg161 and His176 together coordinate beta-D-fructose 1,6-bisphosphate. The active-site Proton acceptor is His183. Residue Tyr228 is modified to Phosphotyrosine. Thr237 provides a ligand contact to substrate.

It belongs to the LDH/MDH superfamily. LDH family. In terms of assembly, homotetramer.

The protein resides in the cytoplasm. The enzyme catalyses (S)-lactate + NAD(+) = pyruvate + NADH + H(+). The protein operates within fermentation; pyruvate fermentation to lactate; (S)-lactate from pyruvate: step 1/1. With respect to regulation, allosterically activated by fructose 1,6-bisphosphate (FBP). In terms of biological role, catalyzes the conversion of lactate to pyruvate. The chain is L-lactate dehydrogenase from Shouchella clausii (strain KSM-K16) (Alkalihalobacillus clausii).